Here is a 359-residue protein sequence, read N- to C-terminus: Peptide chain release factor 1 (359 aa).

Gln-233 is subject to N5-methylglutamine.

It belongs to the prokaryotic/mitochondrial release factor family. Methylated by PrmC. Methylation increases the termination efficiency of RF1.

The protein resides in the cytoplasm. In terms of biological role, peptide chain release factor 1 directs the termination of translation in response to the peptide chain termination codons UAG and UAA. The sequence is that of Peptide chain release factor 1 from Clostridium acetobutylicum (strain ATCC 824 / DSM 792 / JCM 1419 / IAM 19013 / LMG 5710 / NBRC 13948 / NRRL B-527 / VKM B-1787 / 2291 / W).